The sequence spans 503 residues: Aspartyl/glutamyl-tRNA(Asn/Gln) amidotransferase subunit B (503 aa).

Belongs to the GatB/GatE family. GatB subfamily. Heterotrimer of A, B and C subunits.

It catalyses the reaction L-glutamyl-tRNA(Gln) + L-glutamine + ATP + H2O = L-glutaminyl-tRNA(Gln) + L-glutamate + ADP + phosphate + H(+). The catalysed reaction is L-aspartyl-tRNA(Asn) + L-glutamine + ATP + H2O = L-asparaginyl-tRNA(Asn) + L-glutamate + ADP + phosphate + 2 H(+). In terms of biological role, allows the formation of correctly charged Asn-tRNA(Asn) or Gln-tRNA(Gln) through the transamidation of misacylated Asp-tRNA(Asn) or Glu-tRNA(Gln) in organisms which lack either or both of asparaginyl-tRNA or glutaminyl-tRNA synthetases. The reaction takes place in the presence of glutamine and ATP through an activated phospho-Asp-tRNA(Asn) or phospho-Glu-tRNA(Gln). The sequence is that of Aspartyl/glutamyl-tRNA(Asn/Gln) amidotransferase subunit B from Rhodococcus erythropolis (strain PR4 / NBRC 100887).